A 160-amino-acid chain; its full sequence is Ribosomal RNA large subunit methyltransferase H (160 aa).

Residues Leu77, Gly109, and 128–133 (FSRLTF) each bind S-adenosyl-L-methionine.

Belongs to the RNA methyltransferase RlmH family. In terms of assembly, homodimer.

Its subcellular location is the cytoplasm. It catalyses the reaction pseudouridine(1915) in 23S rRNA + S-adenosyl-L-methionine = N(3)-methylpseudouridine(1915) in 23S rRNA + S-adenosyl-L-homocysteine + H(+). In terms of biological role, specifically methylates the pseudouridine at position 1915 (m3Psi1915) in 23S rRNA. The sequence is that of Ribosomal RNA large subunit methyltransferase H from Desulfitobacterium hafniense (strain DSM 10664 / DCB-2).